The primary structure comprises 172 residues: uncharacterized protein (172 aa).

3 helical membrane passes run V44 to T68, L86 to L110, and V117 to F135.

Belongs to the chlamydial CPn_0442/CT_006/TC_0274 family.

The protein localises to the cell membrane. This is an uncharacterized protein from Chlamydia pneumoniae (Chlamydophila pneumoniae).